Reading from the N-terminus, the 235-residue chain is Tetraspanin-8 (235 aa).

The Cytoplasmic portion of the chain corresponds to 1 to 12; it reads MAGVSSCLKYSM. The helical transmembrane segment at 13–33 threads the bilayer; the sequence is FFFNFLFWVCGTLILGLAIWV. Over 34-52 the chain is Extracellular; it reads RVSKDGKEIITSGDSSTNP. Residues 53 to 73 traverse the membrane as a helical segment; that stretch reads FIAVNILIAVGSIIMVLGFLG. Topologically, residues 74-84 are cytoplasmic; sequence CCGAVKESRCM. The chain crosses the membrane as a helical span at residues 85-105; the sequence is LLLFFIGLLLILILQVAAGIL. The Extracellular portion of the chain corresponds to 106 to 203; it reads GAAFKPEYNR…SLIKDLFEKN (98 aa). Asparagine 118 carries an N-linked (GlcNAc...) asparagine glycan. A helical transmembrane segment spans residues 204–224; that stretch reads IIIVIGIAFGLAVIEILGLVF. Topologically, residues 225-235 are cytoplasmic; sequence SMVLYCQIGSK.

It belongs to the tetraspanin (TM4SF) family. In terms of assembly, forms homooligomers. Interacts with MEP1B. Interacts with integrin alpha3/ITGA3. Interacts with RICTOR and MTOR. Interacts with ADAM17. Interacts with ECE1.

The protein localises to the cell membrane. Its function is as follows. Structural component of specialized membrane microdomains known as tetraspanin-enriched microdomains (TERMs), which act as platforms for receptor clustering and signaling. Participates thereby in diverse biological functions such as cell signal transduction, migration and protein trafficking. Promotes ADAM17-mediated TNF-alpha processing through recruitment of ADAM17 to tetraspanin-enriched micro-domains (TEMs). Forms a complex with RICTOR and integrin alpha3/ITGA3 to mediate mTORC2 activation and AKT1 phosphorylation leading to cell migration. Reduces apoptosis and autophagy induced by high glucose levels through forming a complex with mTOR and RICTOR. Contributes to the maintenance of intestinal epithelial barrier and plays a role in the regulation of intestine inflammation by switching interferon gamma receptor 1/IFNGR1 from clathrin-dependent to lipid raft-dependent endocytosis route to limit STAT1 activation magnitude and duration. Acts as a modulator of the endothelin axis by associating with endothelin converting enzyme ECE1 and regulating its activity of conversion of the endothelin-1 precursor to endothelin. The protein is Tetraspanin-8 (Tspan8) of Mus musculus (Mouse).